A 149-amino-acid chain; its full sequence is Gamma-glutamylaminecyclotransferase (149 aa).

7-10 (YGTL) is a binding site for substrate. Glutamate 82 (proton acceptor) is an active-site residue.

It belongs to the gamma-glutamylcyclotransferase family. Monomer.

The catalysed reaction is epsilon-(gamma-L-glutamyl)-L-lysine = 5-oxo-L-proline + L-lysine. Contributes to degradation of proteins cross-linked by transglutaminases by degrading the cross-link between a lysine and a glutamic acid residue. Catalyzes the formation of 5-oxo-L-proline from L-gamma-glutamyl-L-epsilon-lysine. Inactive with L-gamma-glutamyl-alpha-amino acid substrates such as L-gamma-glutamyl-L-alpha-cysteine and L-gamma-glutamyl-L-alpha-alanine. In Mus musculus (Mouse), this protein is Gamma-glutamylaminecyclotransferase (Ggact).